The chain runs to 108 residues: UPF0060 membrane protein KPN78578_15550 (108 aa).

4 consecutive transmembrane segments (helical) span residues 6 to 26 (LLFF…WLWL), 29 to 49 (GATP…VWLL), 61 to 81 (AAYG…VDGV), and 86 to 106 (YDWA…AGWG).

Belongs to the UPF0060 family.

Its subcellular location is the cell inner membrane. This chain is UPF0060 membrane protein KPN78578_15550, found in Klebsiella pneumoniae subsp. pneumoniae (strain ATCC 700721 / MGH 78578).